The sequence spans 29 residues: Trypsin inhibitor 1 (29 aa).

Disulfide bonds link Cys-3/Cys-20, Cys-10/Cys-22, and Cys-16/Cys-28.

Belongs to the protease inhibitor I7 (squash-type serine protease inhibitor) family.

The protein localises to the secreted. Inhibits trypsin. This chain is Trypsin inhibitor 1, found in Momordica repens.